The primary structure comprises 1515 residues: Lysophospholipase nte1 (1515 aa).

Residues 1–59 lie on the Cytoplasmic side of the membrane; it reads MESLSNLGNAMSSVLSETTSTTATAILADPTEALSSVVALASDAVSKATSDVVPEHTPT. Residues 60 to 80 form a helical membrane-spanning segment; the sequence is SWFTIILWLLHRISSVLYFVI. Residues 81–102 lie on the Lumenal side of the membrane; the sequence is KLTTITTPTFLFNIFSTSLTVT. Residues 103–123 form a helical membrane-spanning segment; that stretch reads MNATTLVLIMLFMMAGVTWVV. Residues 124–1515 are Cytoplasmic-facing; that stretch reads RYRYLNMYSR…RTMAPRRASI (1392 aa). Disordered regions lie at residues 278 to 303, 519 to 580, and 617 to 639; these read MHDT…GYPM, VTAT…TPRN, and VNPD…SRGG. Polar residues-rich tracts occupy residues 543–554 and 566–579; these read LTNTQQLKSGPA and PRPQ…STPR. A nucleoside 3',5'-cyclic phosphate contacts are provided by residues 670 to 789 and 835 to 955; these read SPVP…LAGY and RLTE…IAAR. The region spanning 1212–1376 is the PNPLA domain; it reads LVLGGGGARG…IDNLTVSRMK (165 aa). A GXGXXG motif is present at residues 1216 to 1221; sequence GGGARG. The GXSXG signature appears at 1243–1247; the sequence is GTSIG. Ser-1245 functions as the Nucleophile in the catalytic mechanism. The Proton acceptor role is filled by Asp-1363. The short motif at 1363 to 1365 is the DGA/G element; the sequence is DGG.

The protein belongs to the NTE family.

It localises to the endoplasmic reticulum membrane. The catalysed reaction is a 1-acyl-sn-glycero-3-phosphocholine + H2O = sn-glycerol 3-phosphocholine + a fatty acid + H(+). Inhibited by organophosphorus esters. Its function is as follows. Intracellular phospholipase B that catalyzes the double deacylation of phosphatidylcholine (PC) to glycerophosphocholine (GroPCho). Plays an important role in membrane lipid homeostasis. Responsible for the rapid PC turnover in response to inositol, elevated temperatures, or when choline is present in the growth medium. The protein is Lysophospholipase nte1 (nte1) of Neurospora crassa (strain ATCC 24698 / 74-OR23-1A / CBS 708.71 / DSM 1257 / FGSC 987).